Consider the following 120-residue polypeptide: Protein VraC (120 aa).

The polypeptide is Protein VraC (Staphylococcus epidermidis (strain ATCC 12228 / FDA PCI 1200)).